The following is a 905-amino-acid chain: MLGSLFRKVFGSRNDRILKTMKKDVERINLLEPEFEALSDAELKEKTAEFRKRLNDGERIEKILPEAFATVREASRRVFGMRHFDVQLIGGMVLNDNRIAEMKTGEGKTLTATLPAYLNALPGKGVHIITVNDYLAKRDAEFNQPLFDFLGLTVAFNIPGMAPEDKKAAYQADITYGTNNEFGFDYLRDNMAFAPQDRVQRELNYALVDEVDSILIDEARTPLIISGPAEDSSEMYRKMNELVPHLVRQEKEDTEEEQGDGDFTIDEKAKQLHLTEHGQEHIEELLKEKGMLDADDSLYSAANISLLHHINAALRAHHLFQKDVDYIIKDDKVVIVDEHTGRTMEGRRWSEGLHQAVEAKEGVPIQNENQTLASITFQNYFRLYNKLAGMTGTADTEAFEFQSIYGLETIVLPTNKPMVRDDRADLIYLTTLEKYEAIAEDIEECRKQKRPVLVGTVSIENSELLSQLLKKKKIPHAVLNAKFHEHEADIIAQAGRPGTVTIATNMAGRGTDIVLGGSWMAEVEKLEEPSNDKIEKIKQDWQKLHDAVIEAGGLHIIGTERHESRRIDNQLRGRAGRQGDPGSSRFYLSLEDPLMRIFASDRIGTMMKRLGMKEGEAIEHPWVTRAIENAQRKVEGRNFDVRKQLLEYDDVANDQRSVVYDQRNELLDEGDISETIVAIRDDVINSVISEYVPPQSLAELWDLKGLEERLRGDFHIELPLQQWLDEEDHFHEEVLRERVLEELVKAYQEKEEMVGPEVLRRFEKSIMLQSLDQHWKEHLAAMDHLRQGIHLRGYAQKNPKQEYKKEAFELFTEMLEALKLDVVTILSKVKVRAQEDVDAVDEQRKAADSAPREFRHEQSGPAAEEPQKNTDNAQGQPVRKGAKVGRNEPCPCGSGKKYKHCHGKL.

ATP is bound by residues Gln-87, 105–109, and Asp-512; that span reads GEGKT. A disordered region spans residues 836 to 905; the sequence is DVDAVDEQRK…KKYKHCHGKL (70 aa). The segment covering 841-858 has biased composition (basic and acidic residues); the sequence is DEQRKAADSAPREFRHEQ. 4 residues coordinate Zn(2+): Cys-890, Cys-892, Cys-901, and His-902. Residues 896–905 are compositionally biased toward basic residues; sequence KKYKHCHGKL.

The protein belongs to the SecA family. In terms of assembly, monomer and homodimer. Part of the essential Sec protein translocation apparatus which comprises SecA, SecYEG and auxiliary proteins SecDF-YajC and YidC. Zn(2+) is required as a cofactor.

The protein resides in the cell inner membrane. It localises to the cytoplasm. The enzyme catalyses ATP + H2O + cellular proteinSide 1 = ADP + phosphate + cellular proteinSide 2.. In terms of biological role, part of the Sec protein translocase complex. Interacts with the SecYEG preprotein conducting channel. Has a central role in coupling the hydrolysis of ATP to the transfer of proteins into and across the cell membrane, serving both as a receptor for the preprotein-SecB complex and as an ATP-driven molecular motor driving the stepwise translocation of polypeptide chains across the membrane. This chain is Protein translocase subunit SecA, found in Idiomarina loihiensis (strain ATCC BAA-735 / DSM 15497 / L2-TR).